The sequence spans 275 residues: 3-methyl-2-oxobutanoate hydroxymethyltransferase (275 aa).

Mg(2+) contacts are provided by Asp-44 and Asp-83. Residues 44-45, Asp-83, and Lys-113 contribute to the 3-methyl-2-oxobutanoate site; that span reads DS. A Mg(2+)-binding site is contributed by Glu-115. Glu-182 serves as the catalytic Proton acceptor.

This sequence belongs to the PanB family. In terms of assembly, homodecamer; pentamer of dimers. Mg(2+) serves as cofactor.

It is found in the cytoplasm. The enzyme catalyses 3-methyl-2-oxobutanoate + (6R)-5,10-methylene-5,6,7,8-tetrahydrofolate + H2O = 2-dehydropantoate + (6S)-5,6,7,8-tetrahydrofolate. The protein operates within cofactor biosynthesis; (R)-pantothenate biosynthesis; (R)-pantoate from 3-methyl-2-oxobutanoate: step 1/2. Functionally, catalyzes the reversible reaction in which hydroxymethyl group from 5,10-methylenetetrahydrofolate is transferred onto alpha-ketoisovalerate to form ketopantoate. In Clostridium botulinum (strain Alaska E43 / Type E3), this protein is 3-methyl-2-oxobutanoate hydroxymethyltransferase.